The primary structure comprises 803 residues: 3',5'-cyclic-AMP phosphodiesterase 4D (803 aa).

Residues 1–103 (MEAEGSSVPA…SGASRVRHRG (103 aa)) are disordered. H52 and H56 each carry phosphoserine. Residues 58-85 (PPPPPPSPQPQLQPPPPPPLPPPPPPPG) show a composition bias toward pro residues. Phosphoserine occurs at positions 137, 294, 296, 343, and 370. Positions 338-358 (EVEIPSPTQKEKEKKKRPMSQ) are disordered. The PDEase domain maps to 381–710 (VKTEQEDVLA…EWYQSTIPQS (330 aa)). Residue K382 forms a Glycyl lysine isopeptide (Lys-Gly) (interchain with G-Cter in SUMO) linkage. Catalysis depends on H457, which acts as the Proton donor. Residue H457 coordinates 3',5'-cyclic AMP. H457 is a binding site for AMP. H461, H497, D498, and D615 together coordinate Zn(2+). 5 residues coordinate AMP: D498, D615, N618, Q666, and F669. D498 is a Mg(2+) binding site. Residue D498 coordinates Mn(2+). Positions 666 and 669 each coordinate 3',5'-cyclic AMP. Disordered stretches follow at residues 705 to 724 (STIP…GRQG) and 732 to 803 (ELTL…CPDT). The span at 757–768 (CSDSKTLCTQDS) shows a compositional bias: polar residues. Acidic residues predominate over residues 774–789 (PLDEQVEEEAVAEEES).

It belongs to the cyclic nucleotide phosphodiesterase family. PDE4 subfamily. In terms of assembly, homodimer for the long isoforms. Isoforms with truncated N-termini are monomeric. Binds ARRB2. Isoform 33 is part of a ternary complex containing PRKAR2A, PRKAR2B and AKAP9. Identified in a complex composed of RYR1, PDE4D, PKA, FKBP1A and protein phosphatase 1 (PP1). Interacts with PDE4DIP. Isoform 5 interacts (via N-terminal region) with SHANK2 (via proline-rich region); the interaction is increased in a PKA-dependent manner. Isoform 33, isoform 4, isoform 7, isoform 8 and isoform 9 but not isoform 32 and isoform 6 interact with SHANK2. Isoform 31 interacts weakly with SHANK2. Requires Zn(2+) as cofactor. Mg(2+) is required as a cofactor. The cofactor is Mn(2+). In terms of processing, isoform 1 and isoform 9 are rapidly activated by PKA through phosphorylation. Long isoforms that share a conserved PKA phosphorylation site in the N-terminus are also activated. Sumoylation of long isoforms by PIAS4 augments their activation by PKA phosphorylation and represses their inhibition by ERK phosphorylation. In terms of tissue distribution, expressed in epithelial cells. Isoform 33, isoform 4, isoform 5 and isoform 9 are expressed in brain. Isoform 33, isoform 5, isoform 8 and isoform 9 are expressed in heart (at protein level). Isoform 4 and isoform 6 are strongly expressed in cortex and cerebellum. Isoform 7 is strongly expressed in cortex and testis; weakly expressed in kidney, lung, spleen and cerebellum. Isoform 8 is strongly expressed in lung, heart and liver. Isoform 31, isoform 32, isoform 33, isoform 5 and isoform 9 are widely distributed.

It is found in the apical cell membrane. Its subcellular location is the cytoplasm. It localises to the membrane. The protein resides in the cytoskeleton. The protein localises to the microtubule organizing center. It is found in the centrosome. The enzyme catalyses 3',5'-cyclic AMP + H2O = AMP + H(+). It functions in the pathway purine metabolism; 3',5'-cyclic AMP degradation; AMP from 3',5'-cyclic AMP: step 1/1. With respect to regulation, activated by phosphatidic acid. Inhibited by rolipram. In terms of biological role, hydrolyzes the second messenger cAMP, which is a key regulator of many important physiological processes. The sequence is that of 3',5'-cyclic-AMP phosphodiesterase 4D (Pde4d) from Rattus norvegicus (Rat).